We begin with the raw amino-acid sequence, 529 residues long: MIETNHKDNFLIDGENKNLEINDIISISKGEKNIIFTNELLEFLQKGRDQLENKLKENVAIYGINTGFGGNGDLIIPFDKLDYHQSNLLDFLTCGTGDFFNDQYVRGIQFIIIIALSRGWSGVRPMVIQTLAKHLNKGIIPQVPMHGSVGASGDLVPLSYIANVLCGKGMVKYNEKLMNASDALKITSIEPLVLKSKEGLALVNGTRVMSSVSCISINKFETIFKAAIGSIALAVEGLLASKDHYDMRIHNLKNHPGQILIAQILNKYFNTSDNNTKSSNITFNQSENVQKLDKSVQEVYSLRCAPQILGIISENISNAKIVIKREILSVNDNPLIDPYYGDVLSGGNFMGNHIARIMDGIKLDISLVANHLHSLVALMMHSEFSKGLPNSLSPNPGIYQGYKGMQISQTSLVVWLRQEAAPACIHSLTTEQFNQDIVSLGLHSANGAASMLIKLCDIVSMTLIIAFQAISLRMKSIENFKLPNKVQKLYSSIIKIIPILENDRRTDIDVREITNAILQDKLDFINLNL.

The segment at residues 151 to 153 (ASG) is a cross-link (5-imidazolinone (Ala-Gly)). Serine 152 carries the 2,3-didehydroalanine (Ser) modification.

The protein belongs to the PAL/histidase family. In terms of processing, contains an active site 4-methylidene-imidazol-5-one (MIO), which is formed autocatalytically by cyclization and dehydration of residues Ala-Ser-Gly.

It is found in the cytoplasm. It carries out the reaction L-histidine = trans-urocanate + NH4(+). It participates in amino-acid degradation; L-histidine degradation into L-glutamate; N-formimidoyl-L-glutamate from L-histidine: step 1/3. The polypeptide is hal-like protein DDB_G0273787/DDB_G0273081 (Dictyostelium discoideum (Social amoeba)).